Reading from the N-terminus, the 279-residue chain is Putative pyruvate, phosphate dikinase regulatory protein (279 aa).

153-160 (GVSRTSKT) contributes to the ADP binding site.

Belongs to the pyruvate, phosphate/water dikinase regulatory protein family. PDRP subfamily.

The catalysed reaction is N(tele)-phospho-L-histidyl/L-threonyl-[pyruvate, phosphate dikinase] + ADP = N(tele)-phospho-L-histidyl/O-phospho-L-threonyl-[pyruvate, phosphate dikinase] + AMP + H(+). It carries out the reaction N(tele)-phospho-L-histidyl/O-phospho-L-threonyl-[pyruvate, phosphate dikinase] + phosphate + H(+) = N(tele)-phospho-L-histidyl/L-threonyl-[pyruvate, phosphate dikinase] + diphosphate. In terms of biological role, bifunctional serine/threonine kinase and phosphorylase involved in the regulation of the pyruvate, phosphate dikinase (PPDK) by catalyzing its phosphorylation/dephosphorylation. The sequence is that of Putative pyruvate, phosphate dikinase regulatory protein from Bradyrhizobium diazoefficiens (strain JCM 10833 / BCRC 13528 / IAM 13628 / NBRC 14792 / USDA 110).